The sequence spans 296 residues: MLLLELLKALILGIVEGLTEFAPVSSTGHMILVDDMWLKSPEFLGSQSAFTFKIVIQLGSVFAAAWVFRKRYFEMLYIGKYQPAATETESADGKIGKRVKPKRLTLWHVLVGMIPAGILGLLFDDVIEKYLFSVPTVMIGLLLGAFYMIFAQKFSERYAHRENIDQITFFQAFVIGLSQAVAMWPGFSRSGSTISTGVLMKMNYKAASDFTFIMAVPIMLAASLLSLVKHIGYIHLSHIPFYIIGFLAAFIFGLLSIRLFLNLINRIKLIPFAIYRIILVIFIAILYFGFGIGKGI.

Transmembrane regions (helical) follow at residues 48-68 (SAFT…AWVF), 104-124 (LTLW…LLFD), 131-151 (LFSV…MIFA), 167-187 (ITFF…WPGF), 208-228 (SDFT…LSLV), 237-257 (SHIP…LLSI), and 272-292 (FAIY…GFGI).

It belongs to the UppP family.

The protein localises to the cell membrane. It catalyses the reaction di-trans,octa-cis-undecaprenyl diphosphate + H2O = di-trans,octa-cis-undecaprenyl phosphate + phosphate + H(+). Its function is as follows. Catalyzes the dephosphorylation of undecaprenyl diphosphate (UPP). Confers resistance to bacitracin. The chain is Undecaprenyl-diphosphatase from Staphylococcus carnosus (strain TM300).